The following is a 236-amino-acid chain: 2-C-methyl-D-erythritol 4-phosphate cytidylyltransferase (236 aa).

This sequence belongs to the IspD/TarI cytidylyltransferase family. IspD subfamily. Homodimer.

It catalyses the reaction 2-C-methyl-D-erythritol 4-phosphate + CTP + H(+) = 4-CDP-2-C-methyl-D-erythritol + diphosphate. Its pathway is isoprenoid biosynthesis; isopentenyl diphosphate biosynthesis via DXP pathway; isopentenyl diphosphate from 1-deoxy-D-xylulose 5-phosphate: step 2/6. In terms of biological role, catalyzes the formation of 4-diphosphocytidyl-2-C-methyl-D-erythritol from CTP and 2-C-methyl-D-erythritol 4-phosphate (MEP). This is 2-C-methyl-D-erythritol 4-phosphate cytidylyltransferase from Escherichia fergusonii (strain ATCC 35469 / DSM 13698 / CCUG 18766 / IAM 14443 / JCM 21226 / LMG 7866 / NBRC 102419 / NCTC 12128 / CDC 0568-73).